We begin with the raw amino-acid sequence, 3412 residues long: Genome polyprotein (3412 aa).

Residues 1–104 are Cytoplasmic-facing; it reads MSGRKAQGKT…LSSRKRRSNE (104 aa). Positions 38–72 are hydrophobic; homodimerization of capsid protein C; the sequence is PGPSRGVQGFIFFFLFNILTGKKLTAHLKKLWRML. A propeptide spans 102-121 (ER anchor for the capsid protein C, removed in mature form by serine protease NS3); it reads SNEMALFPLLLLGLLALSGG. A helical transmembrane segment spans residues 105–125; the sequence is MALFPLLLLGLLALSGGVTLV. Residues 126–244 lie on the Extracellular side of the membrane; it reads RKNRWLLLNV…GERQLQKIER (119 aa). N-linked (GlcNAc...) asparagine; by host glycosylation is found at Asn-134 and Asn-150. A helical transmembrane segment spans residues 245–265; sequence WLVRNPFFAVTALAIAYLVGN. Residues 266-270 are Cytoplasmic-facing; the sequence is NTTQR. A helical membrane pass occupies residues 271–285; it reads VVIALLVLAVGPAYS. The Extracellular segment spans residues 286–730; it reads AHCIGITDRD…TVFGSAFQGL (445 aa). Cystine bridges form between Cys-288-Cys-315, Cys-345-Cys-401, Cys-345-Cys-406, Cys-359-Cys-390, Cys-377-Cys-401, Cys-377-Cys-406, Cys-467-Cys-568, and Cys-585-Cys-615. The segment at 383–396 is fusion peptide; it reads DRGWGNGCGLFGKG. Residues 731–751 traverse the membrane as a helical segment; sequence FGGLSWITKVIMGAVLIWVGI. Over 752 to 757 the chain is Extracellular; that stretch reads NTRNMT. A helical transmembrane segment spans residues 758-778; the sequence is MSMSMILVGVIMMFLSLGVGA. Residues 779 to 1132 lie on the Extracellular side of the membrane; the sequence is DQGCAVNFGK…LVRSWVTAGE (354 aa). 6 disulfides stabilise this stretch: Cys-782/Cys-793, Cys-833/Cys-921, Cys-957/Cys-1002, Cys-1058/Cys-1107, Cys-1069/Cys-1091, and Cys-1090/Cys-1094. N-linked (GlcNAc...) asparagine; by host glycosylation is found at Asn-908 and Asn-986. The helical transmembrane segment at 1133-1153 threads the bilayer; the sequence is VHAVPFGLVSMMIAMEVVLRR. Over 1154-1201 the chain is Cytoplasmic; it reads RQGPKQMLVGGVVLLGAMLVGQVTVLDLVKFVVAVGLHFHEINNGGDA. Residues 1202–1222 form a helical membrane-spanning segment; it reads MYMALIASFSIRPGLLMGFGL. The Lumenal portion of the chain corresponds to 1223–1287; that stretch reads RTLWSPRERL…ILPLMALMTP (65 aa). The helical transmembrane segment at 1288–1308 threads the bilayer; it reads MTMHEVRMATMLFCTVVIIGV. The Cytoplasmic portion of the chain corresponds to 1309 to 1355; it reads LHQNSKDTSMQKTIPIVALTLTSYMGLTQPFLGLCAYMSTQVFGRRS. Residues 1356 to 1376 traverse the membrane as a helical segment; sequence IPVNEALAAAGLVGVLAGLAF. Topologically, residues 1377-1378 are lumenal; that stretch reads QD. A helical membrane pass occupies residues 1379–1399; it reads MENFLGPIAVGGILMMLVSVA. Residues 1400-1456 lie on the Cytoplasmic side of the membrane; sequence GRVDGLELKKLGEISWEEEAEISGSSSRYDVALSEQGEFKLLSEDKVPWDQIVMTSL. The tract at residues 1407–1446 is interacts with and activates NS3 protease; it reads LKKLGEISWEEEAEISGSSSRYDVALSEQGEFKLLSEDKV. An intramembrane region (helical) is located at residues 1457–1477; it reads ALVGAAIHPFALLLVLGGWIL. Residues 1478–2157 lie on the Cytoplasmic side of the membrane; the sequence is HIKGARRSGD…RNALSMMPEA (680 aa). In terms of domain architecture, Peptidase S7 spans 1485-1665; sequence SGDVLWDIPT…ELKEESKEEL (181 aa). Active-site charge relay system; for serine protease NS3 activity residues include His-1537, Asp-1561, and Ser-1622. Residues 1669-1825 enclose the Helicase ATP-binding domain; the sequence is PTMLKKGMTT…HSNGEIEDVQ (157 aa). The segment at 1673–1676 is important for RNA-binding; the sequence is KKGM. ATP is bound at residue 1682–1689; sequence FHPGAGKT. The DEAH box motif lies at 1773-1776; it reads DEAH. The region spanning 1836-1997 is the Helicase C-terminal domain; sequence GHEWILADKR…VRGGMVAPLY (162 aa). At Lys-1877 the chain carries N6-acetyllysine; by host. The segment at 1942-1963 is disordered; sequence AAQRRGRIGRNPNRDGDSYYYS. The chain crosses the membrane as a helical span at residues 2158–2178; that stretch reads MTIVMLFLLAGLLTSGAVIFF. Residues 2179 to 2186 lie on the Lumenal side of the membrane; it reads MSPKGMSR. The helical intramembrane region spans 2187-2207; that stretch reads MSMAMGTMAGSGYLMFLGGVK. Over 2208 to 2209 the chain is Lumenal; sequence PT. The helical transmembrane segment at 2210–2230 threads the bilayer; the sequence is HISYVMLIFFVLMVVVIPEPG. The Cytoplasmic segment spans residues 2231–2241; sequence QQRTIQDNQVA. The chain crosses the membrane as a helical span at residues 2242–2262; it reads YLIIGILTLLSVVAANELGML. The Lumenal segment spans residues 2263 to 2293; sequence EKTKEDFFGKRDITTPSGAIPWSWPDLDLKP. The helical intramembrane region spans 2294–2314; it reads GAAWTVYVGIVTMLSPMLHHW. The Lumenal segment spans residues 2315-2360; sequence IKVEYGNLSLSGIAQSASVLSFMDKGIPFMKMNISVVILLVSGWNS. Residues 2361–2380 traverse the membrane as a helical segment; it reads ITVIPLLCGIGGAMLHWTLI. Over 2381–2421 the chain is Cytoplasmic; it reads LPGIKAQQSKLAQKRVFHGVAKNPVVDGNPTADIEEAPEMP. Residues 2422–2442 form a helical membrane-spanning segment; that stretch reads ALYEKKLALYLLLALSLMSVA. The Lumenal segment spans residues 2443–2445; sequence MCR. Residues 2446 to 2466 traverse the membrane as a helical segment; sequence TPFSLAEGIVLSSAALGPLIE. At 2467–3411 the chain is on the cytoplasmic side; the sequence is GNTSLLWNGP…VDADLQPGEL (945 aa). In terms of domain architecture, mRNA cap 0-1 NS5-type MT spans 2508-2772; the sequence is GSASGKTLGE…DVILPIGTRS (265 aa). Ser-2563 serves as a coordination point for S-adenosyl-L-methionine. Ser-2563 bears the Phosphoserine mark. Lys-2568 serves as the catalytic For 2'-O-MTase activity. S-adenosyl-L-methionine is bound by residues Gly-2593, Trp-2594, Thr-2611, Leu-2612, Asp-2638, and Val-2639. Asp-2653 functions as the For 2'-O-MTase activity in the catalytic mechanism. Residue Ile-2654 participates in S-adenosyl-L-methionine binding. Residues Lys-2689 and Glu-2725 each act as for 2'-O-MTase activity in the active site. Tyr-2727 lines the S-adenosyl-L-methionine pocket. A Nuclear localization signal motif is present at residues 2879-2912; sequence RKIMKVVNRWLFRHLSREKNPRLCTKEEFIAKVR. Zn(2+) contacts are provided by Glu-2946, His-2950, Cys-2955, and Cys-2958. The region spanning 3036–3188 is the RdRp catalytic domain; it reads GGFYADDTAG…RPVDDRFGLA (153 aa). Zn(2+) contacts are provided by His-3223, Cys-3239, and Cys-3358.

It in the N-terminal section; belongs to the class I-like SAM-binding methyltransferase superfamily. mRNA cap 0-1 NS5-type methyltransferase family. As to quaternary structure, homodimer. Interacts (via N-terminus) with host EXOC1 (via C-terminus); this interaction results in EXOC1 degradation through the proteasome degradation pathway. In terms of assembly, forms heterodimers with envelope protein E in the endoplasmic reticulum and Golgi. Homodimer; in the endoplasmic reticulum and Golgi. Interacts with protein prM. Interacts with non-structural protein 1. As to quaternary structure, homodimer; Homohexamer when secreted. Interacts with envelope protein E. In terms of assembly, interacts (via N-terminus) with serine protease NS3. Forms a heterodimer with serine protease NS3. May form homooligomers. As to quaternary structure, forms a heterodimer with NS2B. Interacts with non-structural protein 2A (via N-terminus). Interacts with NS4B. Interacts with unphosphorylated RNA-directed RNA polymerase NS5; this interaction stimulates RNA-directed RNA polymerase NS5 guanylyltransferase activity. NS3 interacts with host PDCD6IP; this interaction contributes to virion release. In terms of assembly, interacts with serine protease NS3. Homodimer. Interacts with host STAT2; this interaction prevents the establishment of cellular antiviral state. Interacts with serine protease NS3. Interacts with host TRIM23; this interaction leads to NS5 ubiquitination. In terms of processing, specific enzymatic cleavages in vivo yield mature proteins. The nascent capsid protein C contains a C-terminal hydrophobic domain that act as a signal sequence for translocation of prM into the lumen of the ER. Mature capsid protein C is cleaved at a site upstream of this hydrophobic domain by NS3. prM is cleaved in post-Golgi vesicles by a host furin, releasing the mature small envelope protein M, and peptide pr. Non-structural protein 2A-alpha, a C-terminally truncated form of non-structural protein 2A, results from partial cleavage by NS3. Specific enzymatic cleavages in vivo yield mature proteins peptide 2K acts as a signal sequence and is removed from the N-terminus of NS4B by the host signal peptidase in the ER lumen. Signal cleavage at the 2K-4B site requires a prior NS3 protease-mediated cleavage at the 4A-2K site. Post-translationally, cleaved in post-Golgi vesicles by a host furin, releasing the mature small envelope protein M, and peptide pr. This cleavage is incomplete as up to 30% of viral particles still carry uncleaved prM. N-glycosylated. In terms of processing, N-glycosylated. The excreted form is glycosylated and this is required for efficient secretion of the protein from infected cells. Post-translationally, polyubiquitinated; ubiquitination is probably mediated by host TRIM23 and is prerequisite for NS5-STAT2 interaction. NS5 is not ISGylated or sumoylated. Acetylated by host KAT5. Acetylation modulates NS3 RNA-binding and unwinding activities and plays an important positive role for viral replication. In terms of processing, phosphorylated on serines residues. This phosphorylation may trigger NS5 nuclear localization.

It is found in the virion. Its subcellular location is the host nucleus. The protein localises to the host cytoplasm. The protein resides in the host perinuclear region. It localises to the secreted. It is found in the virion membrane. Its subcellular location is the host endoplasmic reticulum membrane. The enzyme catalyses Selective hydrolysis of -Xaa-Xaa-|-Yaa- bonds in which each of the Xaa can be either Arg or Lys and Yaa can be either Ser or Ala.. The catalysed reaction is RNA(n) + a ribonucleoside 5'-triphosphate = RNA(n+1) + diphosphate. It carries out the reaction a ribonucleoside 5'-triphosphate + H2O = a ribonucleoside 5'-diphosphate + phosphate + H(+). It catalyses the reaction ATP + H2O = ADP + phosphate + H(+). The enzyme catalyses a 5'-end (5'-triphosphoguanosine)-ribonucleoside in mRNA + S-adenosyl-L-methionine = a 5'-end (N(7)-methyl 5'-triphosphoguanosine)-ribonucleoside in mRNA + S-adenosyl-L-homocysteine. The catalysed reaction is a 5'-end (N(7)-methyl 5'-triphosphoguanosine)-ribonucleoside in mRNA + S-adenosyl-L-methionine = a 5'-end (N(7)-methyl 5'-triphosphoguanosine)-(2'-O-methyl-ribonucleoside) in mRNA + S-adenosyl-L-homocysteine + H(+). In terms of biological role, plays a role in virus budding by binding to the cell membrane and gathering the viral RNA into a nucleocapsid that forms the core of a mature virus particle. During virus entry, may induce genome penetration into the host cytoplasm after hemifusion induced by the surface proteins. Can migrate to the cell nucleus where it modulates host functions. Inhibits RNA silencing by interfering with host Dicer. Its function is as follows. Prevents premature fusion activity of envelope proteins in trans-Golgi by binding to envelope protein E at pH6.0. After virion release in extracellular space, gets dissociated from E dimers. Functionally, acts as a chaperone for envelope protein E during intracellular virion assembly by masking and inactivating envelope protein E fusion peptide. prM is the only viral peptide matured by host furin in the trans-Golgi network probably to avoid catastrophic activation of the viral fusion activity in acidic Golgi compartment prior to virion release. prM-E cleavage is inefficient, and many virions are only partially matured. These uncleaved prM would play a role in immune evasion. In terms of biological role, may play a role in virus budding. Exerts cytotoxic effects by activating a mitochondrial apoptotic pathway through M ectodomain. May display a viroporin activity. Binds to host cell surface receptor and mediates fusion between viral and cellular membranes. Envelope protein is synthesized in the endoplasmic reticulum in the form of heterodimer with protein prM. They play a role in virion budding in the ER, and the newly formed immature particle is covered with 60 spikes composed of heterodimer between precursor prM and envelope protein E. The virion is transported to the Golgi apparatus where the low pH causes dissociation of PrM-E heterodimers and formation of E homodimers. prM-E cleavage is inefficient, and many virions are only partially matured. These uncleaved prM would play a role in immune evasion. Its function is as follows. Involved in immune evasion, pathogenesis and viral replication. Once cleaved off the polyprotein, is targeted to three destinations: the viral replication cycle, the plasma membrane and the extracellular compartment. Essential for viral replication. Required for formation of the replication complex and recruitment of other non-structural proteins to the ER-derived membrane structures. Excreted as a hexameric lipoparticle that plays a role against host immune response. Antagonizing the complement function. Binds to the host macrophages and dendritic cells. Inhibits signal transduction originating from Toll-like receptor 3 (TLR3). Functionally, component of the viral RNA replication complex that functions in virion assembly and antagonizes the host immune response. In terms of biological role, required cofactor for the serine protease function of NS3. May have membrane-destabilizing activity and form viroporins. Displays three enzymatic activities: serine protease, NTPase and RNA helicase. NS3 serine protease, in association with NS2B, performs its autocleavage and cleaves the polyprotein at dibasic sites in the cytoplasm: C-prM, NS2A-NS2B, NS2B-NS3, NS3-NS4A, NS4A-2K and NS4B-NS5. NS3 RNA helicase binds RNA and unwinds dsRNA in the 3' to 5' direction. Also plays a role in virus assembly. Its function is as follows. Regulates the ATPase activity of the NS3 helicase activity. NS4A allows NS3 helicase to conserve energy during unwinding. Functionally, functions as a signal peptide for NS4B and is required for the interferon antagonism activity of the latter. In terms of biological role, induces the formation of ER-derived membrane vesicles where the viral replication takes place. Inhibits interferon (IFN)-induced host STAT1 phosphorylation and nuclear translocation, thereby preventing the establishment of cellular antiviral state by blocking the IFN-alpha/beta pathway. Replicates the viral (+) and (-) RNA genome, and performs the capping of genomes in the cytoplasm. NS5 methylates viral RNA cap at guanine N-7 and ribose 2'-O positions. Besides its role in RNA genome replication, also prevents the establishment of cellular antiviral state by blocking the interferon-alpha/beta (IFN-alpha/beta) signaling pathway. IFN-I induces binding of NS5 to host IFN-activated transcription factor STAT2, preventing its transcriptional activity. Host TRIM23 is the E3 ligase that interacts with and polyubiquitinates NS5 to promote its binding to STAT2 and trigger IFN-I signaling inhibition. The chain is Genome polyprotein from Aedes aegypti (Yellowfever mosquito).